A 313-amino-acid polypeptide reads, in one-letter code: Small glutamine-rich tetratricopeptide repeat-containing protein alpha (313 aa).

A disordered region spans residues 66–100 (ATGKEMPQDLRSPARTPPSEEDSAEAERLKTEGNE). S77 is subject to Phosphoserine. T81 is modified (phosphothreonine). At S84 the chain carries Phosphoserine. The span at 90–100 (EAERLKTEGNE) shows a compositional bias: basic and acidic residues. TPR repeat units follow at residues 91 to 124 (AERLKTEGNEQMKVENFEAAVHFYGKAIELNPAN), 125 to 158 (AVYFCNRAAAYSKLGNYAGAVQDCERAICIDPAY), and 159 to 192 (SKAYGRMGLALSSLNKHVEAVAYYKKALELDPDN). K137 bears the N6-acetyllysine mark. The disordered stretch occupies residues 250 to 269 (MISGGNNPLGTPGTSPSQND). At S301 the chain carries Phosphoserine. T303 carries the post-translational modification Phosphothreonine. S305 carries the phosphoserine modification.

This sequence belongs to the SGT family. As to quaternary structure, homodimer. Homooligomer. Interacts with DNAJC5 and DNAJC5B. Interacts (via TPR repeats) with HSP90AA1. Interacts (via Gln-rich region) with SLC2A1. Interacts with HSP90AB1. Interacts (via TPR repeats) with HSPA8/Hsc70; the interaction is direct. Interacts with BAG6 (via ubiquitin-like domain); interaction prevents interaction between BAG6 and RNF126. Forms a multiprotein complex, at least composed of DNAJB12, DNAJB14, HSPA8/Hsc70 and SGTA; interaction with DNAJB14 and HSPA8/Hsc70 is direct. (Microbial infection) Interacts with Vpu and Gag from HIV-1. In terms of assembly, (Microbial infection) Interacts with SARS-CoV accessory protein 7a. In terms of tissue distribution, ubiquitous.

The protein resides in the cytoplasm. It localises to the nucleus. Its function is as follows. Co-chaperone that binds misfolded and hydrophobic patches-containing client proteins in the cytosol. Mediates their targeting to the endoplasmic reticulum but also regulates their sorting to the proteasome when targeting fails. Functions in tail-anchored/type II transmembrane proteins membrane insertion constituting with ASNA1 and the BAG6 complex a targeting module. Functions upstream of the BAG6 complex and ASNA1, binding more rapidly the transmembrane domain of newly synthesized proteins. It is also involved in the regulation of the endoplasmic reticulum-associated misfolded protein catabolic process via its interaction with BAG6: collaborates with the BAG6 complex to maintain hydrophobic substrates in non-ubiquitinated states. Competes with RNF126 for interaction with BAG6, preventing the ubiquitination of client proteins associated with the BAG6 complex. Binds directly to HSC70 and HSP70 and regulates their ATPase activity. In terms of biological role, (Microbial infection) In case of infection by polyomavirus, involved in the virus endoplasmic reticulum membrane penetration and infection via interaction with DNAJB12, DNAJB14 and HSPA8/Hsc70. This is Small glutamine-rich tetratricopeptide repeat-containing protein alpha (SGTA) from Homo sapiens (Human).